Consider the following 116-residue polypeptide: Large ribosomal subunit protein bL20c (116 aa).

The protein belongs to the bacterial ribosomal protein bL20 family.

It is found in the plastid. Its subcellular location is the chloroplast. Its function is as follows. Binds directly to 23S ribosomal RNA and is necessary for the in vitro assembly process of the 50S ribosomal subunit. It is not involved in the protein synthesizing functions of that subunit. This is Large ribosomal subunit protein bL20c (rpl20) from Marchantia polymorpha (Common liverwort).